The primary structure comprises 158 residues: MSRFTGKKIVIIGDRDGIPGPAIEECLKPIDCEVIFSSTECFVUTAAGAMDLENQKRIKEATEKFGAENLVVLIGAAEAEAAGLAAETVTAGDPTFAGPLAGVELGLRVYHAVEPEFKDEVDAQIFDDQVGMMEMVLNVDEIIEEMQSIRSQFCKFND.

Residue selenocysteine 44 is part of the active site. Selenocysteine 44 is a non-standard amino acid (selenocysteine).

Belongs to the GrdA family. Monomer. Component of the glycine, sarcosine and betaine reductase complexes, together with components B and C.

It carries out the reaction acetyl phosphate + [thioredoxin]-disulfide + NH4(+) + H2O = [thioredoxin]-dithiol + glycine + phosphate + H(+). The enzyme catalyses acetyl phosphate + methylamine + [thioredoxin]-disulfide + H2O = sarcosine + [thioredoxin]-dithiol + phosphate + H(+). It catalyses the reaction acetyl phosphate + trimethylamine + [thioredoxin]-disulfide + H2O = glycine betaine + [thioredoxin]-dithiol + phosphate + H(+). In terms of biological role, in the first step of glycine, betaine and sarcosine reductases, the substrate is bound to component PB via a Schiff base intermediate. Then the PB-activated substrate is nucleophilically attacked by the selenol anion of component PA to transform it to a carboxymethylated selenoether and the respective amine. By action of component PC, acetyl phosphate is formed, leaving component PA in its oxidized state. Finally component PA becomes reduced by the thioredoxin system to start a new catalytic cycle of reductive deamination. This chain is Glycine/sarcosine/betaine reductase complex component A (grdA), found in Acetoanaerobium sticklandii (strain ATCC 12662 / DSM 519 / JCM 1433 / CCUG 9281 / NCIMB 10654 / HF) (Clostridium sticklandii).